The sequence spans 299 residues: Regucalcin (299 aa).

Glutamate 18 contributes to the a divalent metal cation binding site. The substrate site is built by arginine 101, asparagine 103, and glutamate 121. Residue lysine 144 is modified to N6-succinyllysine. A divalent metal cation contacts are provided by asparagine 154 and aspartate 204. The active-site Proton donor/acceptor is the aspartate 204. N6-succinyllysine occurs at positions 244 and 253.

It belongs to the SMP-30/CGR1 family. Monomer. It depends on Zn(2+) as a cofactor. Mn(2+) serves as cofactor. Ca(2+) is required as a cofactor. The cofactor is Mg(2+).

The protein localises to the cytoplasm. The enzyme catalyses D-glucono-1,5-lactone + H2O = D-gluconate + H(+). Its function is as follows. Gluconolactonase with low activity towards other sugar lactones, including gulonolactone and galactonolactone. Can also hydrolyze diisopropyl phosphorofluoridate and phenylacetate (in vitro). Calcium-binding protein. Modulates Ca(2+) signaling, and Ca(2+)-dependent cellular processes and enzyme activities. In Pongo abelii (Sumatran orangutan), this protein is Regucalcin (RGN).